We begin with the raw amino-acid sequence, 1701 residues long: Rho guanine nucleotide exchange factor TIAM2 (1701 aa).

Disordered regions lie at residues 1–21 (MGNSDSQYTLQGSKNHSNTIT), 201–250 (SPTL…SSWY), 265–293 (GSFLAPGMPDPSLHASFPPGDAKKPFNQS), and 389–417 (SLSRKKRKLQEPRSKEGSDYFDSRSDGLN). Glycine 2 carries the N-myristoyl glycine lipid modification. Over residues 238 to 248 (SKGSSLSSESS) the composition is skewed to low complexity. The segment covering 397-413 (LQEPRSKEGSDYFDSRS) has biased composition (basic and acidic residues). Residues 506 to 620 (VVRKAGWLFF…WVTAVHSACA (115 aa)) form the PH 1 domain. The stretch at 628–695 (GKEDTLRLLK…KFHMDLFRMR (68 aa)) forms a coiled coil. The region spanning 810 to 881 (IQTYVHFQDN…YMQQQVYDEI (72 aa)) is the RBD domain. Residues 890-976 (DVQLTKTGSV…GLTLIARPPD (87 aa)) form the PDZ domain. The tract at residues 1070–1092 (DSQANGMEGPRENQDPPPRSLAR) is disordered. The DH domain occupies 1099–1293 (RLRKVIQELV…EKVASHINEM (195 aa)). The PH 2 domain occupies 1347–1478 (DLELTVFVFK…EKTCKDRLVP (132 aa)). 2 disordered regions span residues 1500–1556 (NSSS…GLAD) and 1568–1628 (LSDE…PKLV). Low complexity predominate over residues 1513–1527 (GTLLDSDEGSLSSGT). Residue serine 1583 is modified to Phosphoserine. Residues 1596–1607 (RISEDPDVHPEA) show a composition bias toward basic and acidic residues. The residue at position 1648 (threonine 1648) is a Phosphothreonine.

It belongs to the TIAM family. Interacts with MAP1A, MAP1B, PARP1 and YWHAE. Interacts with CD44, PARD3 and MAPK8IP2. Phosphorylated on serine and threonine residues. Phosphorylated on Thr-1648 by Rho-kinase. Its phosphorylation by Rho-kinase inhibits its guanine nucleotide exchange activity, its interaction with MAP1A, MAP1B, PARP1 and YWHAE and reduces its ability to promote neurite growth. In terms of tissue distribution, expressed in the occipital, frontal and temporal lobes, cerebellum, putamen and testis.

Its subcellular location is the cytoplasm. It localises to the cell projection. The protein resides in the lamellipodium. It is found in the filopodium. The protein localises to the growth cone. Its subcellular location is the neuron projection. It localises to the perikaryon. Modulates the activity of RHO-like proteins and connects extracellular signals to cytoskeletal activities. Acts as a GDP-dissociation stimulator protein that stimulates the GDP-GTP exchange activity of RHO-like GTPases and activates them. Mediates extracellular laminin signals to activate Rac1, contributing to neurite growth. Involved in lamellipodial formation and advancement of the growth cone of embryonic hippocampal neurons. Promotes migration of neurons in the cerebral cortex. When overexpressed, induces membrane ruffling accompanied by the accumulation of actin filaments along the altered plasma membrane. Activates specifically RAC1, but not CDC42 and RHOA. The chain is Rho guanine nucleotide exchange factor TIAM2 (TIAM2) from Homo sapiens (Human).